The primary structure comprises 331 residues: Oxygen-evolving enhancer protein 1-2, chloroplastic (331 aa).

The N-terminal 57 residues, 1 to 57 (MATSLQAAATFLQPAKIAASPSRNVHLRSNQTVGKSFGLDSSQARLTCSLHSDLKDF), are a transit peptide targeting the chloroplast. Residues 58 to 84 (AGKCSDAAKIAGFALATSALVVSGAGA) constitute a thylakoid transit peptide.

This sequence belongs to the PsbO family.

The protein resides in the plastid. It localises to the chloroplast thylakoid membrane. Functionally, stabilizes the manganese cluster which is the primary site of water splitting. Regulates dephosphorylation and turnover of the PSII reaction center D1 protein. The protein is Oxygen-evolving enhancer protein 1-2, chloroplastic (PSBO2) of Arabidopsis thaliana (Mouse-ear cress).